The sequence spans 305 residues: tRNA pseudouridine synthase B (305 aa).

Aspartate 50 acts as the Nucleophile in catalysis.

Belongs to the pseudouridine synthase TruB family. Type 1 subfamily.

It catalyses the reaction uridine(55) in tRNA = pseudouridine(55) in tRNA. In terms of biological role, responsible for synthesis of pseudouridine from uracil-55 in the psi GC loop of transfer RNAs. In Rhodococcus jostii (strain RHA1), this protein is tRNA pseudouridine synthase B.